A 155-amino-acid chain; its full sequence is Small ribosomal subunit protein uS9 (155 aa).

This sequence belongs to the universal ribosomal protein uS9 family.

This chain is Small ribosomal subunit protein uS9, found in Sinorhizobium medicae (strain WSM419) (Ensifer medicae).